We begin with the raw amino-acid sequence, 598 residues long: ATP-dependent lipid A-core flippase (598 aa).

Polar residues predominate over residues 1-15; that stretch reads MSQAYQPDSTKTSAK. The disordered stretch occupies residues 1–21; it reads MSQAYQPDSTKTSAKTPVAPT. The next 4 membrane-spanning stretches (helical) occupy residues 44 to 64, 85 to 105, 172 to 192, and 269 to 289; these read WWAI…EIWI, LFPF…FLGN, VVAL…ILFV, and INTP…VWLA. In terms of domain architecture, ABC transmembrane type-1 spans 48-329; it reads LLTIIGFAIN…LTDVNQQLQR (282 aa). The ABC transporter domain occupies 360 to 595; the sequence is IKLDNVSLVY…HGHYAQMYAR (236 aa). 393 to 400 serves as a coordination point for ATP; sequence GRSGAGKS.

It belongs to the ABC transporter superfamily. Lipid exporter (TC 3.A.1.106) family. As to quaternary structure, homodimer.

Its subcellular location is the cell inner membrane. The enzyme catalyses ATP + H2O + lipid A-core oligosaccharideSide 1 = ADP + phosphate + lipid A-core oligosaccharideSide 2.. Functionally, involved in lipopolysaccharide (LPS) biosynthesis. Translocates lipid A-core from the inner to the outer leaflet of the inner membrane. Transmembrane domains (TMD) form a pore in the inner membrane and the ATP-binding domain (NBD) is responsible for energy generation. The sequence is that of ATP-dependent lipid A-core flippase from Psychrobacter cryohalolentis (strain ATCC BAA-1226 / DSM 17306 / VKM B-2378 / K5).